The primary structure comprises 407 residues: 1-deoxy-D-xylulose 5-phosphate reductoisomerase (407 aa).

NADPH-binding residues include T25, G26, S27, I28, N53, and N136. K137 contributes to the 1-deoxy-D-xylulose 5-phosphate binding site. E138 lines the NADPH pocket. Residue D162 participates in Mn(2+) binding. 1-deoxy-D-xylulose 5-phosphate contacts are provided by S163, E164, S188, and H211. E164 contributes to the Mn(2+) binding site. G217 contributes to the NADPH binding site. 1-deoxy-D-xylulose 5-phosphate-binding residues include S224, N229, K230, and E233. Residue E233 participates in Mn(2+) binding.

This sequence belongs to the DXR family. Mg(2+) serves as cofactor. It depends on Mn(2+) as a cofactor.

It catalyses the reaction 2-C-methyl-D-erythritol 4-phosphate + NADP(+) = 1-deoxy-D-xylulose 5-phosphate + NADPH + H(+). It functions in the pathway isoprenoid biosynthesis; isopentenyl diphosphate biosynthesis via DXP pathway; isopentenyl diphosphate from 1-deoxy-D-xylulose 5-phosphate: step 1/6. Catalyzes the NADPH-dependent rearrangement and reduction of 1-deoxy-D-xylulose-5-phosphate (DXP) to 2-C-methyl-D-erythritol 4-phosphate (MEP). In Rhodopseudomonas palustris (strain TIE-1), this protein is 1-deoxy-D-xylulose 5-phosphate reductoisomerase.